Here is a 357-residue protein sequence, read N- to C-terminus: Protein-L-isoaspartate O-methyltransferase domain-containing protein 1 (357 aa).

Gly-2 carries N-myristoyl glycine lipidation. Residue Ser-64 is part of the active site. AdoMet binding motif stretches follow at residues Leu-85–Leu-94, Tyr-160–Tyr-164, and Leu-181–Ile-191. The segment at Val-240–Tyr-250 is BC-box. Residues Pro-299–Leu-333 form a disordered region. The span at Asp-301–Glu-317 shows a compositional bias: acidic residues. The span at Lys-318–Leu-333 shows a compositional bias: basic and acidic residues. Residues Leu-341–Pro-344 form a CUL-box region.

The protein belongs to the methyltransferase superfamily. L-isoaspartyl/D-aspartyl protein methyltransferase family. In terms of assembly, component of the probable ECS(PCMTD1) E3 ubiquitin-protein ligase complex, at least composed of CUL5, ELOB, ELOC, RBX2 and PCMTD1. Interacts (via the BC-box) with ELOB and ELOC; the interaction is direct and stabilizes PCMTD1.

The protein resides in the cytoplasm. It localises to the membrane. Substrate recognition component of an ECS (Elongin BC-CUL5-SOCS-box protein) E3 ubiquitin ligase complex which mediates the ubiquitination and subsequent proteasomal degradation of target proteins. Specifically binds to the methyltransferase cofactor S-adenosylmethionine (AdoMet) via the N-terminal AdoMet binding motif, but does not display methyltransferase activity. May provide an alternate maintenance pathway for modified proteins by acting as a damage-specific E3 ubiquitin ligase adaptor protein. This Homo sapiens (Human) protein is Protein-L-isoaspartate O-methyltransferase domain-containing protein 1.